The sequence spans 552 residues: Dihydroxy-acid dehydratase (552 aa).

D78 is a binding site for Mg(2+). Residue C119 participates in [2Fe-2S] cluster binding. The Mg(2+) site is built by D120 and K121. N6-carboxylysine is present on K121. C191 serves as a coordination point for [2Fe-2S] cluster. E442 is a Mg(2+) binding site. Catalysis depends on S468, which acts as the Proton acceptor.

This sequence belongs to the IlvD/Edd family. Homodimer. [2Fe-2S] cluster is required as a cofactor. The cofactor is Mg(2+).

It catalyses the reaction (2R)-2,3-dihydroxy-3-methylbutanoate = 3-methyl-2-oxobutanoate + H2O. The enzyme catalyses (2R,3R)-2,3-dihydroxy-3-methylpentanoate = (S)-3-methyl-2-oxopentanoate + H2O. The protein operates within amino-acid biosynthesis; L-isoleucine biosynthesis; L-isoleucine from 2-oxobutanoate: step 3/4. It participates in amino-acid biosynthesis; L-valine biosynthesis; L-valine from pyruvate: step 3/4. Functions in the biosynthesis of branched-chain amino acids. Catalyzes the dehydration of (2R,3R)-2,3-dihydroxy-3-methylpentanoate (2,3-dihydroxy-3-methylvalerate) into 2-oxo-3-methylpentanoate (2-oxo-3-methylvalerate) and of (2R)-2,3-dihydroxy-3-methylbutanoate (2,3-dihydroxyisovalerate) into 2-oxo-3-methylbutanoate (2-oxoisovalerate), the penultimate precursor to L-isoleucine and L-valine, respectively. The polypeptide is Dihydroxy-acid dehydratase (Caldicellulosiruptor saccharolyticus (strain ATCC 43494 / DSM 8903 / Tp8T 6331)).